We begin with the raw amino-acid sequence, 492 residues long: Cytochrome P450 2B12 (492 aa).

Phosphoserine is present on serine 129. Cysteine 437 is a heme binding site.

It belongs to the cytochrome P450 family. The cofactor is heme. Preputial gland, but not in liver.

Its subcellular location is the endoplasmic reticulum membrane. The protein localises to the microsome membrane. It carries out the reaction an organic molecule + reduced [NADPH--hemoprotein reductase] + O2 = an alcohol + oxidized [NADPH--hemoprotein reductase] + H2O + H(+). Its function is as follows. Cytochromes P450 are a group of heme-thiolate monooxygenases. In liver microsomes, this enzyme is involved in an NADPH-dependent electron transport pathway. This isozyme seems responsible for metabolism of 2,2',4,4',5,5'-hexachlorobiphenyl. In Rattus norvegicus (Rat), this protein is Cytochrome P450 2B12 (Cyp2b12).